The chain runs to 546 residues: Chaperonin GroEL 1 (546 aa).

Residues 30–33 (TLGP), Lys-51, 87–91 (DGTTT), Gly-415, 479–481 (NAA), and Asp-495 contribute to the ATP site. The tract at residues 526–546 (KEDAPMPGGMPGGMGGMGMDM) is disordered. Over residues 534 to 546 (GMPGGMGGMGMDM) the composition is skewed to gly residues.

Belongs to the chaperonin (HSP60) family. In terms of assembly, forms a cylinder of 14 subunits composed of two heptameric rings stacked back-to-back. Interacts with the co-chaperonin GroES.

The protein localises to the cytoplasm. The catalysed reaction is ATP + H2O + a folded polypeptide = ADP + phosphate + an unfolded polypeptide.. Its function is as follows. Together with its co-chaperonin GroES, plays an essential role in assisting protein folding. The GroEL-GroES system forms a nano-cage that allows encapsulation of the non-native substrate proteins and provides a physical environment optimized to promote and accelerate protein folding. The polypeptide is Chaperonin GroEL 1 (Burkholderia pseudomallei (strain 1106a)).